The primary structure comprises 373 residues: tRNA-specific 2-thiouridylase MnmA (373 aa).

ATP-binding positions include 7–14 (AMSGGVDS) and leucine 33. The active-site Nucleophile is the cysteine 101. Cysteine 101 and cysteine 215 are oxidised to a cystine. An ATP-binding site is contributed by glycine 125. Residues 165–167 (KDQ) are interaction with tRNA. The active-site Cysteine persulfide intermediate is the cysteine 215.

Belongs to the MnmA/TRMU family.

Its subcellular location is the cytoplasm. It catalyses the reaction S-sulfanyl-L-cysteinyl-[protein] + uridine(34) in tRNA + AH2 + ATP = 2-thiouridine(34) in tRNA + L-cysteinyl-[protein] + A + AMP + diphosphate + H(+). In terms of biological role, catalyzes the 2-thiolation of uridine at the wobble position (U34) of tRNA, leading to the formation of s(2)U34. This chain is tRNA-specific 2-thiouridylase MnmA, found in Roseiflexus sp. (strain RS-1).